The sequence spans 930 residues: MAKVRVHELAKELGITSKEALSTLKDLGEFVSSASSTIEPPVVKKLRSAYPGAGKSAAKPGSTPAAPAAGRSAAPKPAAAPSPRAVAPTSDAGAPAPGPAAGRTAATKPGVAPTPGPAAPTPAAQVPAEPKAPQPSATPGSAAPKPGAAAPKPGAPRPGNNPFSPKGGSAGSRPGARPGGRGGAPRPGNNPFAPSQGMRSGREDRAPRPGGPRPPAGAGGPRPGGPRPAAGAGGPRPGGPRPNPGMMPKQITPAPQPARGRGRPGGGPGGGPGRPGGPGGRGGRGNAQGAFGRGGGPRKGRKSKRAKRQEFEQQHTREIGGVKVPKGDGTTVLRLRRGASLADFAEKIRADVADLVKVLFTLGEMASANQSLDEETFQLLGDELGYKVQIVSPEDEDKELLEAFDIDLEAEEANEDEADLEPRPAVVTVMGHVDHGKTRLLDAIRSSNVIEGEAGGITQHIGAYQVPVEHEGEQRRLTFIDTPGHEAFTAMRARGAKVTDIAVLVVAADDGVMPQTVEALNHAQSAGVPIVVAVNKIDKDTAAPDKIRGQLTEYGLVPEEYGGDTMFVDVSARNNINIDQLLEAILLTADAALELTANPHKAARGVAIEANLDKGRGAVVTVLVQTGTLRVGDTMVVGSAHGRVRAMFDENGNAVEAADPSRPVQVLGLSSVPRAGDSFLVTDDERTARQIAERREAADRNAQLAKRRKRITLEDFDQAVAEGKLDTLNLIIKGDASGAVEALEDSLLKIEVGEDEVQLRVIHRGVGAITQNDVNLATVDNAIIIGFNVRPAERVADLADREGVDMRFYNVIYDAIDDIENALKGMLKPEYEEVELGSAEVREVFRSSKWGNIAGSLVRSGLIRRNAQARLVRDGVVVSEHLRIESLRRFKEDATEVREGYECGIGLGSFNDIKEGDVIETFEMQEKPRV.

The segment at 51–325 (PGAGKSAAKP…TREIGGVKVP (275 aa)) is disordered. Composition is skewed to low complexity over residues 56–111 (SAAK…KPGV) and 121–162 (TPAA…GNNP). Residues 263-295 (RPGGGPGGGPGRPGGPGGRGGRGNAQGAFGRGG) show a composition bias toward gly residues. Residues 296 to 307 (GPRKGRKSKRAK) are compositionally biased toward basic residues. Residues 308–320 (RQEFEQQHTREIG) show a composition bias toward basic and acidic residues. One can recognise a tr-type G domain in the interval 422-596 (PRPAVVTVMG…LTADAALELT (175 aa)). Residues 431–438 (GHVDHGKT) form a G1 region. 431–438 (GHVDHGKT) is a binding site for GTP. Positions 456–460 (GITQH) are G2. A G3 region spans residues 481–484 (DTPG). GTP contacts are provided by residues 481 to 485 (DTPGH) and 535 to 538 (NKID). The tract at residues 535 to 538 (NKID) is G4. A G5 region spans residues 571-573 (SAR).

The protein belongs to the TRAFAC class translation factor GTPase superfamily. Classic translation factor GTPase family. IF-2 subfamily.

The protein localises to the cytoplasm. One of the essential components for the initiation of protein synthesis. Protects formylmethionyl-tRNA from spontaneous hydrolysis and promotes its binding to the 30S ribosomal subunits. Also involved in the hydrolysis of GTP during the formation of the 70S ribosomal complex. This Micrococcus luteus (strain ATCC 4698 / DSM 20030 / JCM 1464 / CCM 169 / CCUG 5858 / IAM 1056 / NBRC 3333 / NCIMB 9278 / NCTC 2665 / VKM Ac-2230) (Micrococcus lysodeikticus) protein is Translation initiation factor IF-2.